The primary structure comprises 33 residues: Neutrophil defensin 4 (33 aa).

Disulfide bonds link Cys-3–Cys-31, Cys-5–Cys-20, and Cys-10–Cys-30.

It belongs to the alpha-defensin family. HANP-2 could be a product of proteolytic N-terminal amino acid removal from HANP-4.

Its subcellular location is the secreted. Bactericidal activity, greater against Gram-positive bacteria. Low anti-fungi activity. The sequence is that of Neutrophil defensin 4 from Mesocricetus auratus (Golden hamster).